We begin with the raw amino-acid sequence, 1013 residues long: Probable outer membrane protein PmpG (1013 aa).

The N-terminal stretch at 1–27 (MQTSFHKFFLSMILAYSCCSLSGGGYA) is a signal peptide. The region spanning 733-1013 (GRSYCRGLWV…GLSAGSKVRF (281 aa)) is the Autotransporter domain.

It belongs to the PMP outer membrane protein family.

The protein localises to the secreted. It is found in the cell wall. Its subcellular location is the cell outer membrane. The polypeptide is Probable outer membrane protein PmpG (pmpG) (Chlamydia trachomatis serovar D (strain ATCC VR-885 / DSM 19411 / UW-3/Cx)).